Here is a 487-residue protein sequence, read N- to C-terminus: 3-octaprenyl-4-hydroxybenzoate carboxy-lyase (487 aa).

Asn172 provides a ligand contact to Mn(2+). Prenylated FMN is bound by residues 175–177, 189–191, and 194–195; these read IYR, RWL, and RG. Glu238 provides a ligand contact to Mn(2+). The Proton donor role is filled by Asp287.

The protein belongs to the UbiD family. Homohexamer. Requires prenylated FMN as cofactor. The cofactor is Mn(2+).

It is found in the cell membrane. It carries out the reaction a 4-hydroxy-3-(all-trans-polyprenyl)benzoate + H(+) = a 2-(all-trans-polyprenyl)phenol + CO2. Its pathway is cofactor biosynthesis; ubiquinone biosynthesis. Its function is as follows. Catalyzes the decarboxylation of 3-octaprenyl-4-hydroxy benzoate to 2-octaprenylphenol, an intermediate step in ubiquinone biosynthesis. This chain is 3-octaprenyl-4-hydroxybenzoate carboxy-lyase, found in Blochmanniella pennsylvanica (strain BPEN).